The following is a 247-amino-acid chain: 3-deoxy-manno-octulosonate cytidylyltransferase (247 aa).

The protein belongs to the KdsB family.

It localises to the cytoplasm. The catalysed reaction is 3-deoxy-alpha-D-manno-oct-2-ulosonate + CTP = CMP-3-deoxy-beta-D-manno-octulosonate + diphosphate. Its pathway is nucleotide-sugar biosynthesis; CMP-3-deoxy-D-manno-octulosonate biosynthesis; CMP-3-deoxy-D-manno-octulosonate from 3-deoxy-D-manno-octulosonate and CTP: step 1/1. It functions in the pathway bacterial outer membrane biogenesis; lipopolysaccharide biosynthesis. In terms of biological role, activates KDO (a required 8-carbon sugar) for incorporation into bacterial lipopolysaccharide in Gram-negative bacteria. The chain is 3-deoxy-manno-octulosonate cytidylyltransferase from Leptospira interrogans serogroup Icterohaemorrhagiae serovar Lai (strain 56601).